We begin with the raw amino-acid sequence, 469 residues long: Cysteine--tRNA ligase (469 aa).

Cysteine 29 serves as a coordination point for Zn(2+). The 'HIGH' region motif lies at 31–41 (PTVYNYIHIGN). Positions 210, 235, and 239 each coordinate Zn(2+). The 'KMSKS' region signature appears at 267–271 (KMSKS). Lysine 270 lines the ATP pocket.

It belongs to the class-I aminoacyl-tRNA synthetase family. As to quaternary structure, monomer. The cofactor is Zn(2+).

It is found in the cytoplasm. It carries out the reaction tRNA(Cys) + L-cysteine + ATP = L-cysteinyl-tRNA(Cys) + AMP + diphosphate. In Thermosipho africanus (strain TCF52B), this protein is Cysteine--tRNA ligase.